We begin with the raw amino-acid sequence, 391 residues long: S-adenosylmethionine synthase (391 aa).

ATP is bound at residue H19. D21 provides a ligand contact to Mg(2+). E47 contributes to the K(+) binding site. The L-methionine site is built by E60 and Q103. Positions 103–113 (QSADIAQGVDR) are flexible loop. ATP-binding positions include 168–170 (DGK), 236–237 (RF), D245, 251–252 (RK), A268, and K272. L-methionine is bound at residue D245. Residue K276 coordinates L-methionine.

Belongs to the AdoMet synthase family. In terms of assembly, homotetramer; dimer of dimers. It depends on Mg(2+) as a cofactor. K(+) serves as cofactor.

It localises to the cytoplasm. It carries out the reaction L-methionine + ATP + H2O = S-adenosyl-L-methionine + phosphate + diphosphate. It functions in the pathway amino-acid biosynthesis; S-adenosyl-L-methionine biosynthesis; S-adenosyl-L-methionine from L-methionine: step 1/1. Its function is as follows. Catalyzes the formation of S-adenosylmethionine (AdoMet) from methionine and ATP. The overall synthetic reaction is composed of two sequential steps, AdoMet formation and the subsequent tripolyphosphate hydrolysis which occurs prior to release of AdoMet from the enzyme. The protein is S-adenosylmethionine synthase of Nitratidesulfovibrio vulgaris (strain ATCC 29579 / DSM 644 / CCUG 34227 / NCIMB 8303 / VKM B-1760 / Hildenborough) (Desulfovibrio vulgaris).